A 150-amino-acid chain; its full sequence is Thyroid hormone-inducible hepatic protein (150 aa).

The segment at 83-104 is disordered; it reads KVAGNETSEAENDAAETEEAEE. Serine 90 is subject to Phosphoserine. The segment covering 90 to 104 has biased composition (acidic residues); it reads SEAENDAAETEEAEE.

It belongs to the SPOT14 family. In terms of assembly, homodimer. Heterodimer with MID1IP1. Interacts with THRB and PLAGL1. In terms of tissue distribution, mainly expressed in tissues that synthesize triglycerides.

It is found in the nucleus. Its subcellular location is the cytoplasm. Functionally, plays a role in the regulation of lipogenesis, especially in lactating mammary gland. Important for the biosynthesis of triglycerides with medium-length fatty acid chains. May modulate lipogenesis by interacting with MID1IP1 and preventing its interaction with ACACA. May function as transcriptional coactivator. May modulate the transcription factor activity of THRB. The sequence is that of Thyroid hormone-inducible hepatic protein (Thrsp) from Mus musculus (Mouse).